Here is a 524-residue protein sequence, read N- to C-terminus: MENETELRVVHQEEQQREEGEDESQPQNPPPALRRRFVIYLYVGYFLARWSARTWEFSVALYMIHLWPNSLLLAAIYGAIESGSTAIFGPIVGQWVEGMDYVKVLRLWLLFQNLSYTIAGGAVIKLLLVSDLKSRNLPVFAILIVLTNLAGAIGVLSTLAGTILIERDWAVVMSEGHPPAVLTKMNSVIRGIDLSSKLLSPVITGLIISFVSLKASAITFAAWATITAWVEYWLFISVYSGVPAITRSNERRILRSRTKQVEGRDAPVSVSIVPGTEEGYTGNPPSRTGILVILDRMSKSSFVGAWRIYFNQEVVLPGVSLALLFFTVLSFGTLMTATLQWEGIPTYIIGIGRGISATVGLAATLVYPLMQSRLSTLRTGLWSFWSQWSCLLVCVGSIWVKKDKIASYMLMAGVAASRLGLWMFDLAVIQQMQDLVSESDRCVVGGVQNSLQSALDLMAYLLGIIVSNPKDFWILTLISFSTVSLAGMLYTIHLYRIRNHIFHLEKIPLLNKCIFKLLPSRGNV.

Residues 1–18 are compositionally biased toward basic and acidic residues; sequence MENETELRVVHQEEQQRE. A disordered region spans residues 1–30; the sequence is MENETELRVVHQEEQQREEGEDESQPQNPP. The next 11 membrane-spanning stretches (helical) occupy residues 70–92, 109–129, 137–157, 191–211, 218–238, 314–334, 347–367, 380–400, 409–429, 446–466, and 472–492; these read SLLL…GPIV, LLFQ…LLLV, LPVF…GVLS, GIDL…ISFV, ITFA…FISV, VVLP…FGTL, YIIG…TLVY, GLWS…SIWV, MLMA…LAVI, GVQN…GIIV, and FWIL…LYTI.

This sequence belongs to the ferroportin (FP) (TC 2.A.100) family. SLC40A subfamily.

It localises to the membrane. Functionally, may be involved in iron transport and iron homeostasis. The chain is Solute carrier family 40 member 1 (IREG1) from Arabidopsis thaliana (Mouse-ear cress).